The chain runs to 158 residues: S-ribosylhomocysteine lyase (158 aa).

The Fe cation site is built by His-56, His-60, and Cys-125.

It belongs to the LuxS family. Homodimer. The cofactor is Fe cation.

It carries out the reaction S-(5-deoxy-D-ribos-5-yl)-L-homocysteine = (S)-4,5-dihydroxypentane-2,3-dione + L-homocysteine. Functionally, involved in the synthesis of autoinducer 2 (AI-2) which is secreted by bacteria and is used to communicate both the cell density and the metabolic potential of the environment. The regulation of gene expression in response to changes in cell density is called quorum sensing. Catalyzes the transformation of S-ribosylhomocysteine (RHC) to homocysteine (HC) and 4,5-dihydroxy-2,3-pentadione (DPD). The polypeptide is S-ribosylhomocysteine lyase (Leuconostoc citreum (strain KM20)).